We begin with the raw amino-acid sequence, 172 residues long: Ribosome maturation factor RimM (172 aa).

A PRC barrel domain is found at 99-171 (DDIPTWNYFI…LLTVEVPDGL (73 aa)).

Belongs to the RimM family. Binds ribosomal protein uS19.

It localises to the cytoplasm. In terms of biological role, an accessory protein needed during the final step in the assembly of 30S ribosomal subunit, possibly for assembly of the head region. Essential for efficient processing of 16S rRNA. May be needed both before and after RbfA during the maturation of 16S rRNA. It has affinity for free ribosomal 30S subunits but not for 70S ribosomes. This chain is Ribosome maturation factor RimM, found in Phocaeicola vulgatus (strain ATCC 8482 / DSM 1447 / JCM 5826 / CCUG 4940 / NBRC 14291 / NCTC 11154) (Bacteroides vulgatus).